Here is a 561-residue protein sequence, read N- to C-terminus: Putative transport protein Ent638_1362 (561 aa).

5 consecutive transmembrane segments (helical) span residues L8–G28, L32–Q52, F66–F86, M94–F114, and H158–A178. RCK C-terminal domains are found at residues L202 to N288 and V292 to F373. The next 5 helical transmembrane spans lie at L383–F403, F406–L426, F447–S467, M475–A495, and A540–L560.

It belongs to the AAE transporter (TC 2.A.81) family. YbjL subfamily.

It is found in the cell membrane. This Enterobacter sp. (strain 638) protein is Putative transport protein Ent638_1362.